The chain runs to 257 residues: Photosystem I chlorophyll a/b-binding protein 2, chloroplastic (257 aa).

Residues 1–43 constitute a chloroplast transit peptide; the sequence is MASSLCASSAIAAISSPSFLGGKKLRLKKKLTVPAVSRPDASV. Residue Trp55 participates in chlorophyll b binding. 3 residues coordinate chlorophyll a: Phe75, Ser81, and Glu94. Arg99 lines the chlorophyll b pocket. 2 consecutive transmembrane segments (helical) span residues 100-120 and 133-153; these read WAMLGAAGIFIPEFLTKIGIL and YFTDKTTLFVVELILIGWAEG. Chlorophyll b is bound by residues Glu152 and Arg155. The chlorophyll a site is built by Lys208, Glu209, Asn212, Arg214, Gln226, and His241. The helical transmembrane segment at 215-235 threads the bilayer; that stretch reads LAMLAVMGAWFQHIYTGTGPI.

The protein belongs to the light-harvesting chlorophyll a/b-binding (LHC) protein family. In terms of assembly, the LHC complex consists of chlorophyll a-b binding proteins. Red-emitting heterodimers with LHCA3 and LHCA5. Binds to carotenoids. The cofactor is Binds at least 14 chlorophylls (8 Chl-a and 6 Chl-b) and carotenoids such as lutein and neoxanthin.. Post-translationally, photoregulated by reversible phosphorylation of its threonine residues.

Its subcellular location is the plastid. The protein localises to the chloroplast thylakoid membrane. Its function is as follows. The light-harvesting complex (LHC) functions as a light receptor, it captures and delivers excitation energy to photosystems with which it is closely associated, here photosystem I. This is Photosystem I chlorophyll a/b-binding protein 2, chloroplastic from Arabidopsis thaliana (Mouse-ear cress).